The following is a 262-amino-acid chain: MQQPIVGVGHSMGGCQIATLSVTSRRIFSTMILLDPAIGPPEMGLATLGLGQLTLRRRTQWLTREDAEKALRTSFSTWDPQVLDLLIKHSIHSDKQSVEMEDGPVSLVTGRYQELVNYIKPSFIRSGKVVGQELVHQTGPVDMYHMLGLVTCSTLYLCGGESTLSTPRARELWLSRTAELSYSKDPGEMRKVDERIVPDTGHFLPMEEPKECADIIADWIDKDECMIWNCHIGKQGKIWRDLSNTNRKMNAEVWIEYLQSKL.

Residues 260–262 (SKL) carry the Peroxisomal targeting signal type 1 motif.

This sequence belongs to the AB hydrolase superfamily. AKT2 hydrolase family.

Its subcellular location is the peroxisome. Its pathway is mycotoxin biosynthesis. Abhydrolase domain-containing protein; part of the gene clusters that mediate the biosynthesis of the host-selective toxins (HSTs) ACT-toxins responsible for brown spot of tangerine disease by the tangerine pathotype which affects tangerines and mandarins. ACT-toxins consist of three moieties, 9,10-epoxy-8-hydroxy-9-methyl-decatrienoic acid (EDA), valine and a polyketide. ACT-toxin I is toxic to both citrus and pear; toxin II the 5''-deoxy derivative of ACT-toxin I, is highly toxic to pear and slightly toxic to citrus. On cellular level, ACT-toxins affect plasma membrane of susceptible cells and cause a sudden increase in loss of K(+) after a few minutes of toxin treatment. The acyl-CoA ligase ACTT1, the hydrolase ACTT2, the enoyl-CoA hydratases ACTT3 and ACTT6, and the acyl-CoA synthetase ACTT5 are all involved in the biosynthesis of the AK-, AF- and ACT-toxin common 9,10-epoxy-8-hydroxy-9-methyl-decatrienoic acid (EDA) structural moiety. The exact role of each enzyme, and of additional enzymes identified within the AF-toxin clusters have still to be determined. On the other hand, ACTTS1 to ACTTS4 are specific to the tangerine pathotype. The function of ACTTS3 is to elongate the polyketide chain portion of ACT-toxin that is unique to this toxin. The enoyl-reductase ACTTS2 might complement the missing enoyl-reductase (ER) domain in ACTTS3 in the synthesis of the polyketide portion of ACT-toxin. The roles of the nonribosomal peptide synthetases-related proteins ACTTS1 and ACTTS4 have also still not been elucidated. The polypeptide is Abhydrolase domain-containing protein ACTT2-2 (ACTT2-2) (Alternaria alternata (Alternaria rot fungus)).